An 898-amino-acid chain; its full sequence is Chaperone protein ClpB 1 (898 aa).

The Clp R domain maps to 6 to 148 (PTKFTEQAWD…ELAIKAIRGS (143 aa)). 2 repeat regions span residues 9–74 (FTEQ…TNRQ) and 85–148 (LGRS…IRGS). The segment at 161 to 344 (EALDKYGRDL…RRFQQVYVKQ (184 aa)) is NBD1. 208 to 215 (GEPGVGKT) lines the ATP pocket. The tract at residues 345 to 560 (PSVDDTISIL…IAEIVAGWTG (216 aa)) is linker. Residues 395-536 (IDLVDEAAAR…KESKLLEIQG (142 aa)) are a coiled coil. The segment at 570 to 781 (ERQKLLQLEG…RIDDLIIFHT (212 aa)) is NBD2. 620–627 (GPTGVGKT) contributes to the ATP binding site. Residues 782-898 (LKRDELRRIV…TAVEVEVLSS (117 aa)) are C-terminal.

It belongs to the ClpA/ClpB family. As to quaternary structure, homohexamer. The oligomerization is ATP-dependent.

It localises to the cytoplasm. Functionally, part of a stress-induced multi-chaperone system, it is involved in the recovery of the cell from heat-induced damage, in cooperation with DnaK, DnaJ and GrpE. Acts before DnaK, in the processing of protein aggregates. Protein binding stimulates the ATPase activity; ATP hydrolysis unfolds the denatured protein aggregates, which probably helps expose new hydrophobic binding sites on the surface of ClpB-bound aggregates, contributing to the solubilization and refolding of denatured protein aggregates by DnaK. This chain is Chaperone protein ClpB 1 (clpB1), found in Synechocystis sp. (strain ATCC 27184 / PCC 6803 / Kazusa).